The sequence spans 374 residues: Alcohol dehydrogenase class-3 (374 aa).

Position 2 is an N-acetylalanine (A2). Zn(2+) contacts are provided by C45, H67, C97, C100, C103, C111, and C174. K233 is modified (N6-succinyllysine). At S247 the chain carries Phosphoserine. Position 315 is an N6-succinyllysine (K315). Phosphoserine is present on residues S324 and S351.

This sequence belongs to the zinc-containing alcohol dehydrogenase family. Class-III subfamily. As to quaternary structure, homodimer. Requires Zn(2+) as cofactor.

The protein localises to the cytoplasm. It carries out the reaction a primary alcohol + NAD(+) = an aldehyde + NADH + H(+). The enzyme catalyses a secondary alcohol + NAD(+) = a ketone + NADH + H(+). It catalyses the reaction S-(hydroxymethyl)glutathione + NADP(+) = S-formylglutathione + NADPH + H(+). The catalysed reaction is S-(hydroxymethyl)glutathione + NAD(+) = S-formylglutathione + NADH + H(+). It carries out the reaction 20-oxo-(5Z,8Z,11Z,14Z)-eicosatetraenoate + NAD(+) + H2O = (5Z,8Z,11Z,14Z)-eicosatetraenedioate + NADH + 2 H(+). The enzyme catalyses 20-hydroxy-(5Z,8Z,11Z,14Z)-eicosatetraenoate + NAD(+) = 20-oxo-(5Z,8Z,11Z,14Z)-eicosatetraenoate + NADH + H(+). It catalyses the reaction S-nitrosoglutathione + NADH + H(+) = S-(hydroxysulfenamide)glutathione + NAD(+). In terms of biological role, catalyzes the oxidation of long-chain primary alcohols and the oxidation of S-(hydroxymethyl) glutathione. Also oxidizes long chain omega-hydroxy fatty acids, such as 20-HETE, producing both the intermediate aldehyde, 20-oxoarachidonate and the end product, a dicarboxylic acid, (5Z,8Z,11Z,14Z)-eicosatetraenedioate. Class-III ADH is remarkably ineffective in oxidizing ethanol. Required for clearance of cellular formaldehyde, a cytotoxic and carcinogenic metabolite that induces DNA damage. Also acts as a S-nitroso-glutathione reductase by catalyzing the NADH-dependent reduction of S-nitrosoglutathione, thereby regulating protein S-nitrosylation. This Homo sapiens (Human) protein is Alcohol dehydrogenase class-3.